The primary structure comprises 156 residues: Small ribosomal subunit protein uS7cz/uS7cy (156 aa).

This sequence belongs to the universal ribosomal protein uS7 family. In terms of assembly, part of the 30S ribosomal subunit.

The protein localises to the plastid. The protein resides in the chloroplast. Its function is as follows. One of the primary rRNA binding proteins, it binds directly to 16S rRNA where it nucleates assembly of the head domain of the 30S subunit. The sequence is that of Small ribosomal subunit protein uS7cz/uS7cy (rps7-A) from Saccharum hybrid (Sugarcane).